The chain runs to 323 residues: Fructose-1,6-bisphosphatase class 1 (323 aa).

Glu-88, Asp-107, Leu-109, and Asp-110 together coordinate Mg(2+). Substrate contacts are provided by residues 110-113 (DGSS) and Asn-200. Glu-272 contributes to the Mg(2+) binding site.

Belongs to the FBPase class 1 family. As to quaternary structure, homotetramer. It depends on Mg(2+) as a cofactor.

It localises to the cytoplasm. The catalysed reaction is beta-D-fructose 1,6-bisphosphate + H2O = beta-D-fructose 6-phosphate + phosphate. The protein operates within carbohydrate biosynthesis; gluconeogenesis. This is Fructose-1,6-bisphosphatase class 1 from Acinetobacter baumannii (strain ACICU).